The sequence spans 592 residues: E3 ubiquitin-protein ligase RNF180 (592 aa).

Residues 1–564 (MKRSKELITK…DSRGWWFDMD (564 aa)) lie on the Cytoplasmic side of the membrane. S230 is modified (phosphoserine). An RING-type zinc finger spans residues 432–474 (CAVCLDVYFNPYMCYPCRHIFCEPCLRTLAKDNPSSTPCPLCR). The helical transmembrane segment at 565-585 (MVIIYIYSVNWVIGFIVFCFL) threads the bilayer. Over 586–592 (CYFFFPF) the chain is Extracellular.

In terms of assembly, interacts with ZIC2.

It is found in the endoplasmic reticulum membrane. It localises to the nucleus envelope. The catalysed reaction is S-ubiquitinyl-[E2 ubiquitin-conjugating enzyme]-L-cysteine + [acceptor protein]-L-lysine = [E2 ubiquitin-conjugating enzyme]-L-cysteine + N(6)-ubiquitinyl-[acceptor protein]-L-lysine.. Its pathway is protein modification; protein ubiquitination. In terms of biological role, E3 ubiquitin-protein ligase which promotes polyubiquitination and degradation by the proteasome pathway of ZIC2. In Pongo abelii (Sumatran orangutan), this protein is E3 ubiquitin-protein ligase RNF180 (RNF180).